The sequence spans 595 residues: MNAIARQEPFDLNDPALRARAVAAARGDAPFDMLITGGRLLDAVTGLIREADIGLVGALIASVHAPASRTDAVEIIDATGGILTPGLIDMHMHVESSMVTPAEYASAVLPHGVTTVVWDPHEFGNVQGLDGVRWAIEAARTLPLRMILLAPSCVPSAPGLELAGADFDAAVIAEMLRSPAVGGVAEVMNMRGVIDGDPRMSAIVNSGLASGKLVCGHARGLTGADLNAFMAAGVTSDHELTSGADLAAKLSAGLTIELRGSHDHLLQEFVEVLNGLGHLPATVTLCTDDVFPDELYQSGGLDEVARRLVRYGMKPEWALRAATFNAAQRLKRSDLGLVASGRRADLVLFEDLTELRARLVISDGRIVARNGSMEAAVQPLDTAPLINSTKLPPLTESDFRVPAKGARVRIATIDRPRFTQWGEAETEIRDGFVVPPAGSAMIAVAHRHGKAGGTPRIGFLTGWGEWRGAFCTTVSHDSHNLTVFGGDARDMALAANAVIKAGGGLAVAKDGAIQAILPLPLSGLVTDASLKDTASAFSDIRKAMDKIVDWKPPYRVFKACFGATLACNAGPHQTDRGIADVTTGKVLESPVLEIF.

Belongs to the metallo-dependent hydrolases superfamily. Adenine deaminase family. Mn(2+) is required as a cofactor.

It carries out the reaction adenine + H2O + H(+) = hypoxanthine + NH4(+). The chain is Adenine deaminase 2 from Rhizobium etli (strain ATCC 51251 / DSM 11541 / JCM 21823 / NBRC 15573 / CFN 42).